The primary structure comprises 585 residues: Arginine--tRNA ligase (585 aa).

Positions 127-137 (PNTNKPLHVGH) match the 'HIGH' region motif.

This sequence belongs to the class-I aminoacyl-tRNA synthetase family. Monomer.

Its subcellular location is the cytoplasm. The enzyme catalyses tRNA(Arg) + L-arginine + ATP = L-arginyl-tRNA(Arg) + AMP + diphosphate. This is Arginine--tRNA ligase from Borrelia garinii subsp. bavariensis (strain ATCC BAA-2496 / DSM 23469 / PBi) (Borreliella bavariensis).